We begin with the raw amino-acid sequence, 419 residues long: L-cysteine:1D-myo-inositol 2-amino-2-deoxy-alpha-D-glucopyranoside ligase (419 aa).

Residues 1 to 20 (MRSWSVPEVPALPGRGPRVH) form a disordered region. Position 44 (C44) interacts with Zn(2+). L-cysteinyl-5'-AMP contacts are provided by residues 44-47 (CGIT), T59, and 82-84 (NVT). Residues 46–56 (ITPYDATHLGH) carry the 'HIGH' region motif. The 'ERGGDP' region motif lies at 191–196 (ERGGDP). Position 232 (W232) interacts with L-cysteinyl-5'-AMP. C236 lines the Zn(2+) pocket. 254 to 256 (GSD) is an L-cysteinyl-5'-AMP binding site. H261 is a Zn(2+) binding site. V289 is an L-cysteinyl-5'-AMP binding site. The 'KMSKS' region signature appears at 295-299 (KMSKS).

The protein belongs to the class-I aminoacyl-tRNA synthetase family. MshC subfamily. As to quaternary structure, monomer. It depends on Zn(2+) as a cofactor.

It carries out the reaction 1D-myo-inositol 2-amino-2-deoxy-alpha-D-glucopyranoside + L-cysteine + ATP = 1D-myo-inositol 2-(L-cysteinylamino)-2-deoxy-alpha-D-glucopyranoside + AMP + diphosphate + H(+). Its function is as follows. Catalyzes the ATP-dependent condensation of GlcN-Ins and L-cysteine to form L-Cys-GlcN-Ins. This chain is L-cysteine:1D-myo-inositol 2-amino-2-deoxy-alpha-D-glucopyranoside ligase, found in Kineococcus radiotolerans (strain ATCC BAA-149 / DSM 14245 / SRS30216).